We begin with the raw amino-acid sequence, 230 residues long: uncharacterized protein (230 aa).

6 consecutive transmembrane segments (helical) span residues alanine 4–leucine 24, leucine 30–phenylalanine 50, leucine 67–valine 87, valine 91–phenylalanine 111, methionine 148–leucine 168, and methionine 210–isoleucine 230.

The protein belongs to the YohK (E.coli)/YwbG (IPA-22R) (B.subtilis) family.

The protein resides in the cell membrane. This is an uncharacterized protein from Bacillus subtilis (strain 168).